Here is a 454-residue protein sequence, read N- to C-terminus: Serine/arginine (SR)-type shuttling mRNA binding protein HRB1 (454 aa).

The segment at 1–141 (MSDQERGSEN…SSGARGDYGP (141 aa)) is disordered. Residues 14 to 24 (SRSRSRSPVRR) are compositionally biased toward basic residues. Composition is skewed to basic and acidic residues over residues 25 to 38 (RMSDDHGYERDNHL) and 50 to 113 (KFAD…DYPR). Arg127 bears the Omega-N-methylarginine mark. RRM domains lie at 161 to 237 (NSIF…QDNP) and 261 to 338 (HEVI…SKES). Ser338, Ser343, and Ser355 each carry phosphoserine. An RRM 3 domain is found at 376–453 (RLIYCSNLPF…CDLDISYAKR (78 aa)).

Post-translationally, methylated by HMT1.

The protein resides in the cytoplasm. It localises to the nucleus. It is found in the P-body. Its subcellular location is the stress granule. Its function is as follows. Binds to intron-containing transcripts and is involved in quality control for the export of spliced mRNAs from the nucleus. Binds to pre-mRNAs until splicing is completed or until faulty mRNAs are degraded. On correctly spliced mRNAs, GBP2 and HRB1 recruit MEX67 to allow nuclear export. On faulty mRNAs, GBP2 and HRB1 associate with the TRAMP complex that guides those pre-mRNAs to the exosome for degradation. The protein is Serine/arginine (SR)-type shuttling mRNA binding protein HRB1 of Saccharomyces cerevisiae (strain ATCC 204508 / S288c) (Baker's yeast).